The following is a 1282-amino-acid chain: MALVGPRIWGPRRDIYPLLLLLLLLLLLLLPWVPAGLVPPETPSVCASDPCAPGTKCQATESGGYTCEPSELGGCATQPCHHGALCVPQGPDPNSFRCYCVPGFQGPHCELDIDECASRPCQHGGTCQNLADHYECHCPLGYAGVTCEAEVDECSSAPCLHGGSCLDGVGSYRCVCAPGYAGANCQLDVDECQSQPCAHGGVCHDLVNGFRCDCADTGYEGARCEQEVLECASAPCAHNASCLDGFRSFRCLCWPGFSGERCEVDEDECASGPCQNGGQCLQRSDPTLYGGVQAIFPGAFSFSHAAGFLCSCPLGFAGNDCSMDVDECASGPCLNGGSCQDLPNGFQCYCQDGYTGLTCQEDMDECQSEPCLHGGTCSDTVAGYICQCPEAWGGHDCSVQLTGCQGHTCPLAATCIPTFKSGLHGYFCRCPPGTYGPFCGQNTTFSVVSGSSVWGLVPAAASLGLALRFRTTLLAGTLATLKDTRDSLELVLVGAVLQATLSRHGTAVLILTLPDLALNDGHWHQVEVTLHLGTLELRLWHEGCPGQLCVASGPVATGPTASVASGPPGSYSIYLGGGVFAGCFQDVRVEGHLLLPEELKGTVLLGCERREPCQPLPCAHGGACVDLWTHFRCDCPRPYRGATCTDEVPAATFGLGGATSSASFLLHQLGPNLTVSFFLRTREPAGLLLQFANDSVASLTVFLSEGQIRAEGLGHPAVVLPGRWDDGLPHLVMLSFGPDQLQDLGQRLYVGGRFYPDDTQLWGGPFRGCLQDLQLNSIHLPFFSSPMENSSWPSELEAGQSSNLTQGCVSEDTCNPNPCFNGGTCHVTWNDFYCTCSENFTGPTCAQQRWCPRQPCLPPATCEEVPDGFVCVAEATFREGPPAVFTGHNVSSSLSGLTLAFRTRDSEAGLLRAVSAAGAHSNIWLAVRNGSLAGDVAGSVLPAPGPRVADGAWHRVRLAREFPQAAASRWLLWLDGAATPVALHGLGGDLGFLQGPGAVPLLLAENFTGCLGRVALGDFPLPLAPPRSGTVSGAREHFVAWPGSPAVSLGCRGGPVCSPSPCLHGGACRDLFDAFACSCGPAWEGPRCEIRADPCRSTPCVRGQCHARPDGRFECRCPPGFSGPRCRLPVLPQGCNLNSTCKDGAPCEGGPLGTNCSCQEGLAGLRCQSLDKPCEASPCLNGGTCRVASGIFECTCSAGFSGQFCEVVKTLPLPLPFPLLEVAVPAACACLLLLLLGLLSGILAARKRRQSEGTYSPSQQEVAGARLEMDSVLKVPPEERLI.

The signal sequence occupies residues 1-35 (MALVGPRIWGPRRDIYPLLLLLLLLLLLLLPWVPA). Over 36–1221 (GLVPPETPSV…PLPLPFPLLE (1186 aa)) the chain is Extracellular. The region spanning 71–110 (ELGGCATQPCHHGALCVPQGPDPNSFRCYCVPGFQGPHCE) is the EGF-like 1 domain. Intrachain disulfides connect C75-C86, C80-C98, C100-C109, C116-C127, C121-C136, C138-C147, C154-C165, C159-C174, C176-C185, C192-C203, C197-C212, C214-C224, C231-C242, C236-C251, C253-C262, C269-C280, C274-C310, C312-C321, C328-C339, C333-C348, C350-C359, C366-C377, C371-C386, C388-C397, C404-C415, C409-C428, and C430-C439. Positions 112–148 (DIDECASRPCQHGGTCQNLADHYECHCPLGYAGVTCE) constitute an EGF-like 2; calcium-binding domain. Positions 150 to 186 (EVDECSSAPCLHGGSCLDGVGSYRCVCAPGYAGANCQ) constitute an EGF-like 3; calcium-binding domain. The region spanning 188–225 (DVDECQSQPCAHGGVCHDLVNGFRCDCADTGYEGARCE) is the EGF-like 4; calcium-binding domain. EGF-like domains lie at 227-263 (EVLE…ERCE) and 265-322 (DEDE…NDCS). A glycan (N-linked (GlcNAc...) asparagine) is linked at N239. S271 carries an O-linked (Glc...) serine glycan. The 37-residue stretch at 324–360 (DVDECASGPCLNGGSCQDLPNGFQCYCQDGYTGLTCQ) folds into the EGF-like 7; calcium-binding domain. Residues 362 to 398 (DMDECQSEPCLHGGTCSDTVAGYICQCPEAWGGHDCS) enclose the EGF-like 8; calcium-binding domain. The EGF-like 9 domain occupies 400–440 (QLTGCQGHTCPLAATCIPTFKSGLHGYFCRCPPGTYGPFCG). The N-linked (GlcNAc...) asparagine glycan is linked to N442. One can recognise a Laminin G-like 1 domain in the interval 444–607 (TFSVVSGSSV…ELKGTVLLGC (164 aa)). Intrachain disulfides connect C583-C607, C613-C624, C618-C633, and C635-C644. The EGF-like 10 domain occupies 609 to 645 (RREPCQPLPCAHGGACVDLWTHFRCDCPRPYRGATCT). A Laminin G-like 2 domain is found at 649–808 (PAATFGLGGA…GQSSNLTQGC (160 aa)). Residues N672, N693, N789, and N803 are each glycosylated (N-linked (GlcNAc...) asparagine). 4 disulfides stabilise this stretch: C769–C808, C814–C825, C819–C834, and C836–C845. Residues 810–846 (SEDTCNPNPCFNGGTCHVTWNDFYCTCSENFTGPTCA) form the EGF-like 11 domain. 4 N-linked (GlcNAc...) asparagine glycosylation sites follow: N839, N889, N929, and N1006. The Laminin G-like 3 domain occupies 872-1051 (VAEATFREGP…PGSPAVSLGC (180 aa)). 13 cysteine pairs are disulfide-bonded: C1010-C1051, C1057-C1068, C1062-C1077, C1079-C1088, C1095-C1105, C1100-C1115, C1117-C1126, C1135-C1147, C1141-C1156, C1158-C1167, C1174-C1185, C1179-C1194, and C1196-C1205. EGF-like domains lie at 1053–1089 (GGPV…PRCE), 1091–1127 (RADP…PRCR), 1131–1168 (LPQG…LRCQ), and 1170–1206 (LDKP…QFCE). N-linked (GlcNAc...) asparagine glycosylation is found at N1138 and N1155. Residues 1222–1242 (VAVPAACACLLLLLLGLLSGI) form a helical membrane-spanning segment. Residues 1243–1282 (LAARKRRQSEGTYSPSQQEVAGARLEMDSVLKVPPEERLI) lie on the Cytoplasmic side of the membrane. Residues 1246 to 1282 (RKRRQSEGTYSPSQQEVAGARLEMDSVLKVPPEERLI) form an interaction with EPB41L5 region.

It belongs to the Crumbs protein family. As to quaternary structure, interacts (via intracellular domain) with EPB41L5. In terms of processing, O-glucosylated by POGLUT1 at Ser-271; consists of an O-glucose trisaccharide, in which the O-glucose is elongated by the addition of two xylose residues. O-glucosylation is required for localization at the plasma membrane. In terms of tissue distribution, in the adult eye, strongly expressed in the outer nuclear layer, containing the cell bodies of the photoreceptor cells, and in the inner nuclear layer, containing the cell bodies of the horizontal, bipolar, amacrine, and Mueller glial cells. Also expressed in some cells in the ganglion cell layer (or may be displaced amacrine cells rather than ganglion cells).

Its subcellular location is the apical cell membrane. Apical polarity protein that plays a central role during the epithelial-to-mesenchymal transition (EMT) at gastrulation, when newly specified mesodermal cells move inside the embryo. Acts by promoting cell ingression, the process by which cells leave the epithelial epiblast and move inside the embryo to form a new tissue layer. The anisotropic distribution of CRB2 and MYH10/myosin-IIB at cell edges define which cells will ingress: cells with high apical CRB2 are probably extruded from the epiblast by neighboring cells with high levels of apical MYH10/myosin-IIB. Also required for maintenance of the apical polarity complex during development of the cortex. This is Protein crumbs homolog 2 from Mus musculus (Mouse).